The following is a 353-amino-acid chain: UPF0283 membrane protein KPK_3110 (353 aa).

3 helical membrane-spanning segments follow: residues 70 to 90 (MVSAGLAIFGVSVVAQGVQWT), 99 to 119 (WIALGGCVAGALIVGAGVGSV), and 213 to 233 (ESTLMIAVSPLALVDMAFIAW).

It belongs to the UPF0283 family.

Its subcellular location is the cell inner membrane. The sequence is that of UPF0283 membrane protein KPK_3110 from Klebsiella pneumoniae (strain 342).